A 409-amino-acid chain; its full sequence is Regulator of Ty1 transposition protein 103 (409 aa).

A CID domain is found at 1 to 135 (MPFSSEQFTT…DIERSLKTES (135 aa)). Residues 250 to 409 (LNKNVDEDNI…IQDLLSKLAN (160 aa)) form a disordered region. The segment covering 266 to 289 (GDGDDDDDDGDNDDDDDDDDDDKN) has biased composition (acidic residues). Composition is skewed to basic and acidic residues over residues 307–323 (TDKK…EHKN), 337–363 (RTHD…KTSE), and 370–380 (EDGHYELDIEG).

The protein belongs to the UPF0400 (RTT103) family. In terms of assembly, interacts with PCF11, RAI1, RAT1, RPO21 and RBP2.

Its subcellular location is the nucleus. Involved in transcription termination by RNA polymerase II and in regulation of Ty1 transposition. This Saccharomyces cerevisiae (strain ATCC 204508 / S288c) (Baker's yeast) protein is Regulator of Ty1 transposition protein 103 (RTT103).